We begin with the raw amino-acid sequence, 99 residues long: MTPTYYLLLSALLFSIGAVGVLVRRNAIVVFMCVELMLNAVNLTLVTFARINGSVDGQVMAFFVMVVAAAEVVVGLAIIMSIFRTRRSASVDDANLLKY.

Transmembrane regions (helical) follow at residues 3-23 (PTYYLLLSALLFSIGAVGVLV), 28-48 (IVVFMCVELMLNAVNLTLVTF), and 59-79 (VMAFFVMVVAAAEVVVGLAII).

This sequence belongs to the complex I subunit 4L family. NDH-1 is composed of 14 different subunits. Subunits NuoA, H, J, K, L, M, N constitute the membrane sector of the complex.

It is found in the cell membrane. The enzyme catalyses a quinone + NADH + 5 H(+)(in) = a quinol + NAD(+) + 4 H(+)(out). In terms of biological role, NDH-1 shuttles electrons from NADH, via FMN and iron-sulfur (Fe-S) centers, to quinones in the respiratory chain. The immediate electron acceptor for the enzyme in this species is believed to be a menaquinone. Couples the redox reaction to proton translocation (for every two electrons transferred, four hydrogen ions are translocated across the cytoplasmic membrane), and thus conserves the redox energy in a proton gradient. This chain is NADH-quinone oxidoreductase subunit K, found in Saccharopolyspora erythraea (strain ATCC 11635 / DSM 40517 / JCM 4748 / NBRC 13426 / NCIMB 8594 / NRRL 2338).